The following is a 432-amino-acid chain: 3-phosphoshikimate 1-carboxyvinyltransferase (432 aa).

3 residues coordinate 3-phosphoshikimate: Lys22, Ser23, and Arg27. Residue Lys22 participates in phosphoenolpyruvate binding. Gly96 and Arg127 together coordinate phosphoenolpyruvate. 7 residues coordinate 3-phosphoshikimate: Ser173, Ser174, Gln175, Ser201, Asp316, Asn339, and Lys343. Gln175 serves as a coordination point for phosphoenolpyruvate. The active-site Proton acceptor is Asp316. Phosphoenolpyruvate is bound by residues Arg347, Arg391, and Lys416.

It belongs to the EPSP synthase family. In terms of assembly, monomer.

Its subcellular location is the cytoplasm. It carries out the reaction 3-phosphoshikimate + phosphoenolpyruvate = 5-O-(1-carboxyvinyl)-3-phosphoshikimate + phosphate. Its pathway is metabolic intermediate biosynthesis; chorismate biosynthesis; chorismate from D-erythrose 4-phosphate and phosphoenolpyruvate: step 6/7. Catalyzes the transfer of the enolpyruvyl moiety of phosphoenolpyruvate (PEP) to the 5-hydroxyl of shikimate-3-phosphate (S3P) to produce enolpyruvyl shikimate-3-phosphate and inorganic phosphate. The sequence is that of 3-phosphoshikimate 1-carboxyvinyltransferase from Histophilus somni (Haemophilus somnus).